The primary structure comprises 119 residues: Large ribosomal subunit protein bL20 (119 aa).

It belongs to the bacterial ribosomal protein bL20 family.

Functionally, binds directly to 23S ribosomal RNA and is necessary for the in vitro assembly process of the 50S ribosomal subunit. It is not involved in the protein synthesizing functions of that subunit. In Bacillus velezensis (strain DSM 23117 / BGSC 10A6 / LMG 26770 / FZB42) (Bacillus amyloliquefaciens subsp. plantarum), this protein is Large ribosomal subunit protein bL20.